A 430-amino-acid chain; its full sequence is Acylsugar acyltransferase 3 (430 aa).

Active-site proton acceptor residues include H155 and D367.

Belongs to the plant acyltransferase family. In terms of assembly, monomer. Expressed in tip cells of type I trichomes of stems and petioles, sites of acylsugars production.

In terms of biological role, catalyzes the transfer of short (four to five carbons) branched acyl chains to the furanose ring of di-acylsucrose acceptors to produce tri-acylsucroses such as S3:15 (5,5,5), S4:17 (2,5,5,5) and S4:24 (2,5,5,12) acylsucroses. The chain is Acylsugar acyltransferase 3 from Solanum lycopersicum (Tomato).